Consider the following 24-residue polypeptide: Large ribosomal subunit protein uL10 (24 aa).

This sequence belongs to the universal ribosomal protein uL10 family. As to quaternary structure, part of the ribosomal stalk of the 50S ribosomal subunit. The N-terminus interacts with L11 and the large rRNA to form the base of the stalk. The C-terminus forms an elongated spine to which L12 dimers bind in a sequential fashion forming a multimeric L10(L12)X complex.

Its function is as follows. Forms part of the ribosomal stalk, playing a central role in the interaction of the ribosome with GTP-bound translation factors. This chain is Large ribosomal subunit protein uL10 (rplJ), found in Enterobacter cloacae.